A 185-amino-acid polypeptide reads, in one-letter code: Prorelaxin (185 aa).

The N-terminal stretch at 1-24 is a signal peptide; sequence MPRLFLFHLLGVCLLLNQFSRAVA. Disulfide bonds link Cys35–Cys172, Cys47–Cys185, and Cys171–Cys176. A propeptide spans 56-157 (connecting peptide); sequence SLNQEDAPLK…LRSLGLDTHS (102 aa).

The protein belongs to the insulin family. As to quaternary structure, heterodimer of a B chain and an A chain linked by two disulfide bonds.

The protein localises to the secreted. Functionally, relaxin is an ovarian hormone that acts with estrogen to produce dilatation of the birth canal in many mammals. May be involved in remodeling of connective tissues during pregnancy, promoting growth of pubic ligaments and ripening of the cervix. In Macaca mulatta (Rhesus macaque), this protein is Prorelaxin (RLN).